The sequence spans 283 residues: Calpastatin (283 aa).

Over residues 1 to 15 (MNPTETKAIPVSQQM) the composition is skewed to polar residues. Disordered regions lie at residues 1-186 (MNPT…SDPM) and 212-283 (NEGI…KVEK). The segment covering 21 to 30 (PNKKKHKKQA) has biased composition (basic residues). K32 participates in a covalent cross-link: Glycyl lysine isopeptide (Lys-Gly) (interchain with G-Cter in SUMO2). Residues 46–65 (VVHEKKSQEGKPKEHTEQKS) show a composition bias toward basic and acidic residues. At K50 the chain carries N6-acetyllysine. Residue S87 is modified to Phosphoserine. Over residues 107-122 (VSAGGESVAGVAATSG) the composition is skewed to low complexity. S133 bears the Phosphoserine mark. At T135 the chain carries Phosphothreonine. The stretch at 170–222 (IEEENTTYTGPEVSDPMSSTYIEELGKREVTIPPKYRELLAKNEGITGPPADS) is one Inhibitory domain 1 repeat. Phosphoserine occurs at positions 222 and 243. Over residues 249-258 (KKTEKEESTE) the composition is skewed to basic and acidic residues.

This sequence belongs to the protease inhibitor I27 (calpastatin) family.

Specific inhibition of calpain (calcium-dependent cysteine protease). Plays a key role in postmortem tenderization of meat and have been proposed to be involved in muscle protein degradation in living tissue. The sequence is that of Calpastatin (CAST) from Chlorocebus aethiops (Green monkey).